A 910-amino-acid polypeptide reads, in one-letter code: MSRFFANGSESESESSEEEIQATNFNKASAFQFSDDEEEVKRVVRSTKEKRYENLTSIIKTIRNHKKIKDIPNTLSSFEDLTRAYQKALPVISKEENGITPRFYIRCLAELEDFINEVWEDREGRKNLSKNNSKSLGTLRQKVRKYIKDFEDDLSRFREAPDQESEAEDEVVALESDGGDAGDDSDAGVKPTEAVPKAVKSAPAKAAPADDDDSDDSIDWDSDSESETESSDDENQYQNMRERFLKRTTEKEEKDDDKRKDKRKEQKTKIRKRAEDDEDGEWETVVKGHVVEKPKMFEKDAEIDVPLVLAKLLEIMSARGKKRTDRRLQIDLLFELRDISDQHNLGTAVSVKIHFNIISAIYDYNQKISEPMKLEHWALLLEVMQSMMKLLLANADIIMSESVAEEHEEYATSPFYVRGCPLAAVERLDDEFVKLLKECDPHSNDYVSRLKDEVNVVKTIELVLQYFERSGTNNERCRIYLRKIEHLYYKFDPEVLKKKRGELPATTSTSVDVMDKLCKFIYAKDDTDRIRTRAILAHIYHHAMHDNWFQARDLVLMSHLQDNIDAADPATRILYNRMMANLGLCAFRQGNVKDAHHCLVDLMVTGKPKELLAQGLLPQRQHERSAEQEKIEKQRQMPFHMHINLELLECVYLVSAMLLEIPYIAAHEFDARRRMISKTFYQQLRSSERQSLVGPPESMREHVVAAAKAMRCGNWQACANFIVNKKMNTKVWDLFYESDRVREMLTKFIKEESLRTYLFTYSNVYTSISIPSLAQMYELPVPKVHSIISKMIINEELMASLDDPSETVGMHRSEPSRLQALAMQFVDKVTNLVDVNEKVFDMKQGNFFQRGNMGNRGDRGYNRNQNNQGGNWLGQRRDRNNRNRNQRGHHKNNQDRQQQQQQQVQTIDEE.

The interval 1–21 is disordered; it reads MSRFFANGSESESESSEEEIQ. Over residues 11 to 20 the composition is skewed to acidic residues; the sequence is SESESSEEEI. A phosphoserine mark is found at S34, S165, S176, and S185. The disordered stretch occupies residues 157-279; it reads FREAPDQESE…IRKRAEDDED (123 aa). Residues 162 to 186 show a composition bias toward acidic residues; sequence DQESEAEDEVVALESDGGDAGDDSD. Residues 194–207 are compositionally biased toward low complexity; that stretch reads AVPKAVKSAPAKAA. A compositionally biased stretch (acidic residues) spans 209–235; it reads ADDDDSDDSIDWDSDSESETESSDDEN. A compositionally biased stretch (basic and acidic residues) spans 240–268; that stretch reads MRERFLKRTTEKEEKDDDKRKDKRKEQKT. Positions 639-815 constitute a PCI domain; sequence FHMHINLELL…ETVGMHRSEP (177 aa). The disordered stretch occupies residues 847–910; that stretch reads FFQRGNMGNR…QQQVQTIDEE (64 aa). Residues 862 to 874 show a composition bias toward low complexity; it reads NRNQNNQGGNWLG. Basic residues predominate over residues 882 to 891; sequence RNRNQRGHHK. Low complexity predominate over residues 895–910; sequence DRQQQQQQQVQTIDEE.

Belongs to the eIF-3 subunit C family. In terms of assembly, component of the eukaryotic translation initiation factor 3 (eIF-3) complex. The eIF-3 complex interacts with pix.

It localises to the cytoplasm. Its function is as follows. Component of the eukaryotic translation initiation factor 3 (eIF-3) complex, which is involved in protein synthesis of a specialized repertoire of mRNAs and, together with other initiation factors, stimulates binding of mRNA and methionyl-tRNAi to the 40S ribosome. The eIF-3 complex specifically targets and initiates translation of a subset of mRNAs involved in cell proliferation. The sequence is that of Eukaryotic translation initiation factor 3 subunit C from Drosophila melanogaster (Fruit fly).